The chain runs to 424 residues: Serine/threonine-protein kinase H1 (424 aa).

Residue Gly-2 is the site of N-myristoyl glycine attachment. Cys-3 carries the S-palmitoyl cysteine lipid modification. The segment at 56–80 (SQYAHPCPGPPTAGHTEPPSEPPRR) is disordered. The Protein kinase domain occupies 98-355 (YDIKALIGRG…ALQALRHPWV (258 aa)). ATP contacts are provided by residues 104 to 112 (IGRGSFSRV) and Lys-127. Asp-218 serves as the catalytic Proton acceptor. Positions 378-407 (RASSRCQSTKSAQSTRSSRSTRSNKSRRVR) are disordered. 2 positions are modified to phosphoserine; by autocatalysis: Ser-380 and Ser-381. Over residues 385–398 (STKSAQSTRSSRST) the composition is skewed to low complexity.

It belongs to the protein kinase superfamily. CAMK Ser/Thr protein kinase family. As to quaternary structure, homodimer. In terms of processing, autophosphorylated on serine residues. Myristoylated. Required for membrane association. Prerequisite for palmitoylation to occur. Post-translationally, palmitoylated. In terms of tissue distribution, expressed in all tissues and cell lines tested with the highest level of abundance in testis.

Its subcellular location is the golgi apparatus. It localises to the cytoplasm. The protein resides in the cytoskeleton. It is found in the microtubule organizing center. The protein localises to the centrosome. Its subcellular location is the nucleus speckle. It localises to the endoplasmic reticulum membrane. The protein resides in the cell membrane. It carries out the reaction L-seryl-[protein] + ATP = O-phospho-L-seryl-[protein] + ADP + H(+). The catalysed reaction is L-threonyl-[protein] + ATP = O-phospho-L-threonyl-[protein] + ADP + H(+). With respect to regulation, activity depends on Ca(2+) concentration. Serine/threonine protein kinase that may be involved in the regulation of pre-mRNA processing. It may phosphorylate components of nuclear splice factor compartments (SFC), such as non-snRNP splicing factors containing a serine/arginine-rich domain (SR proteins). Reversible phosphorylation of SR proteins may cause their release into the nucleoplasm and change their local concentration, thereby influencing alternative splicing. In Homo sapiens (Human), this protein is Serine/threonine-protein kinase H1 (PSKH1).